The chain runs to 464 residues: 3-isopropylmalate dehydratase large subunit (464 aa).

Cysteine 337, cysteine 397, and cysteine 400 together coordinate [4Fe-4S] cluster.

Belongs to the aconitase/IPM isomerase family. LeuC type 1 subfamily. Heterodimer of LeuC and LeuD. [4Fe-4S] cluster serves as cofactor.

It catalyses the reaction (2R,3S)-3-isopropylmalate = (2S)-2-isopropylmalate. The protein operates within amino-acid biosynthesis; L-leucine biosynthesis; L-leucine from 3-methyl-2-oxobutanoate: step 2/4. In terms of biological role, catalyzes the isomerization between 2-isopropylmalate and 3-isopropylmalate, via the formation of 2-isopropylmaleate. The polypeptide is 3-isopropylmalate dehydratase large subunit (Bacillus cereus (strain ATCC 14579 / DSM 31 / CCUG 7414 / JCM 2152 / NBRC 15305 / NCIMB 9373 / NCTC 2599 / NRRL B-3711)).